We begin with the raw amino-acid sequence, 305 residues long: N-acetylneuraminate lyase 2 (305 aa).

Aceneuramate contacts are provided by Ser-47 and Thr-48. The Proton donor role is filled by Tyr-137. The active-site Schiff-base intermediate with substrate is the Lys-165. 5 residues coordinate aceneuramate: Thr-167, Gly-189, Asp-191, Glu-192, and Ser-208.

This sequence belongs to the DapA family. NanA subfamily. As to quaternary structure, homotetramer.

Its subcellular location is the cytoplasm. The catalysed reaction is aceneuramate = aldehydo-N-acetyl-D-mannosamine + pyruvate. It functions in the pathway amino-sugar metabolism; N-acetylneuraminate degradation; D-fructose 6-phosphate from N-acetylneuraminate: step 1/5. Functionally, catalyzes the reversible aldol cleavage of N-acetylneuraminic acid (sialic acid; Neu5Ac) to form pyruvate and N-acetylmannosamine (ManNAc) via a Schiff base intermediate. This Escherichia coli O6:H1 (strain CFT073 / ATCC 700928 / UPEC) protein is N-acetylneuraminate lyase 2.